The sequence spans 445 residues: Exodeoxyribonuclease 7 large subunit (445 aa).

The protein belongs to the XseA family. As to quaternary structure, heterooligomer composed of large and small subunits.

It localises to the cytoplasm. The catalysed reaction is Exonucleolytic cleavage in either 5'- to 3'- or 3'- to 5'-direction to yield nucleoside 5'-phosphates.. Its function is as follows. Bidirectionally degrades single-stranded DNA into large acid-insoluble oligonucleotides, which are then degraded further into small acid-soluble oligonucleotides. The polypeptide is Exodeoxyribonuclease 7 large subunit (Xanthomonas axonopodis pv. citri (strain 306)).